The following is a 398-amino-acid chain: Phosphoglycerate kinase (398 aa).

Substrate-binding positions include 23–25 (DFN), R38, 61–64 (HLGK), R122, and R155. ATP-binding positions include K206, G297, E328, and 354-357 (GGDS).

It belongs to the phosphoglycerate kinase family. Monomer.

The protein resides in the cytoplasm. The catalysed reaction is (2R)-3-phosphoglycerate + ATP = (2R)-3-phospho-glyceroyl phosphate + ADP. It functions in the pathway carbohydrate degradation; glycolysis; pyruvate from D-glyceraldehyde 3-phosphate: step 2/5. The chain is Phosphoglycerate kinase from Clostridium kluyveri (strain NBRC 12016).